We begin with the raw amino-acid sequence, 362 residues long: 2-oxoglutarate-dependent dioxygenase lolO2 (362 aa).

The 114-residue stretch at 199–312 (TWNYFLGQPV…RYSLVFFGHL (114 aa)) folds into the Fe2OG dioxygenase domain. The Fe cation site is built by His-222, Asp-224, and His-280. A 2-oxoglutarate-binding site is contributed by Arg-303.

Belongs to the iron/ascorbate-dependent oxidoreductase family. The cofactor is Fe(2+).

Its pathway is alkaloid biosynthesis. In terms of biological role, 2-oxoglutarate-dependent dioxygenase; part of the gene cluster that mediates the biosynthesis of loline alkaloids, potent insecticidal agents composed of a pyrrolizidine ring system and an uncommon ether bridge linking carbons 2 and 7. Lolines are structurally differentiated by the various modifications of the L-amino group and include norloline, loline, N-methylloline, N-acetylloline, N-acetylnorloline, and N-formylloline. The first committed step is the condensation of O-acetyl-L-homoserine (derived from L-aspartic acid) and L-proline, probably catalyzed by the gamma-type pyridoxal 5'-phosphate(PLP)-dependent enzyme lolC, to give the diamino diacid, NACPP. Ensuing cyclization, decarboxylation, and acetylation steps yield 1-exo-acetamidopyrrolizidine (AcAP). LolO is required for installation of the ether bridge upon the pathway intermediate, 1-exo-acetamidopyrrolizidine (AcAP). In sequential 2-oxoglutarate- and O(2)-consuming steps, lolO removes hydrogens from C2 and C7 of AcAP to form both carbon-oxygen bonds in N-acetylnorloline (NANL), the precursor to all other lolines. The enzymes lolD, lolE, lolF and lolT have also been proposed to be involved in the ether-bridge installation. Further processing of the exocyclic moiety of NANL by fungal N-acetamidase (LolN), methyltransferase (LolM), and cytochrome P450 (LolP) enzymes, with occasional involvement of a plant acetyltransferase, generates the other known lolines. LolN transforms NANL to norlonine which is monomethylated and dimethylated to respectively lonine and N-methyllonine (NML) by lolM. LolP catalyzes hydroxylation of the methyl group in N-methylloline (NML) and further oxygenation to N-formylloline (NFL). A plant acetyltransferase is responsible for the acetylation of loline to form N-acetylloline (NAL). LolA might interact with aspartate kinase to prevent feedback inhibition of its activity by these end products and thereby promote production of L-homoserine from L-aspartate. This is 2-oxoglutarate-dependent dioxygenase lolO2 from Epichloe uncinata (Endophyte fungus).